The chain runs to 894 residues: Histone-lysine N-methyltransferase PRDM9 (894 aa).

2 disordered regions span residues 1–23 and 143–174; these read MSPE…RKPM and SGSE…LRKK. One can recognise a KRAB-related domain in the interval 23-86; sequence MVKDAFKDIS…RRQAIKLQVD (64 aa). Over residues 143-164 the composition is skewed to polar residues; that stretch reads SGSEQAQKPVSPSGEASTSGQH. Zn(2+) is bound by residues C205, C208, C216, and H219. The SET domain maps to 244–358; it reads PGLRIGPSGI…PGCELLVWYG (115 aa). S-adenosyl-L-methionine is bound by residues 256-258, Y291, and 320-321; these read AGL and NC. 288-294 serves as a coordination point for substrate; that stretch reads NNGYSWL. Y357 is a substrate binding site. K368 is subject to N6,N6,N6-trimethyllysine; alternate. K368 is modified (N6-methyllysine; alternate). K372 and K374 each carry N6-methyllysine. The C2H2-type 1 zinc-finger motif lies at 388-411; that stretch reads HPCPSCCLAFSSQKFLSQHVERNH. Zn(2+) contacts are provided by C390, C393, H406, and H411. The interval 408–469 is disordered; the sequence is ERNHSSQNFP…SKLLNKRTWQ (62 aa). Basic and acidic residues predominate over residues 444-461; it reads PHSRNDKTKGQEIKERSK. The C2H2-type 2; degenerate zinc-finger motif lies at 524 to 546; sequence VKYGECGQGFSVKSDVITHQRTH. 12 C2H2-type zinc fingers span residues 552-574, 580-602, 608-630, 636-658, 664-686, 692-714, 720-742, 748-770, 776-798, 804-826, 832-854, and 860-882; these read YVCR…QRIH, YVCR…QRTH, and YVCR…QRRH. Zn(2+) is bound by residues C722, C725, H738, H742, C750, C753, H766, H770, C778, C781, H794, H798, C806, C809, H822, and H826. Positions 730-820 are DNA-binding; it reads SNKSHLLRHQ…RGFSNKSHLL (91 aa).

The protein belongs to the class V-like SAM-binding methyltransferase superfamily. In terms of assembly, homodimer. Interacts with EHMT2 and CDYL; interaction only takes place when PRDM9 is bound to hotspot DNA. Interacts with CXXC1; this interaction does not link PRDM9-activated recombination hotspot sites with DSB machinery and is not required for the hotspot recognition pathway. Forms a complex with EWSR1, REC8, SYCP3 and SYCP1; complex formation is dependent of phosphorylated form of REC8 and requires PRDM9 bound to hotspot DNA; EWSR1 joins PRDM9 with the chromosomal axis through REC8. Mono-methylated; automethylated. Tri-methylated; automethylated. Mono-methylation is predominant; automethylation is lower and slower than H3 peptide methylation and is in a highest S-adenosyl-L-methionine concentration-dependent. There are two major sites for automethylation at Lys-368 and Lys-374. Lysines can be simultaneously methylated, such as Lys-368(me3)/Lys-372(me1), Lys-368(me1)/Lys-374(me1) and Lys-368(me1)/Lys-372(me1)/Lys-374(me1). Automethylation is an intramolecular (cis) process.

The protein localises to the nucleus. It localises to the chromosome. The catalysed reaction is L-lysyl-[protein] + S-adenosyl-L-methionine = N(6)-methyl-L-lysyl-[protein] + S-adenosyl-L-homocysteine + H(+). It catalyses the reaction N(6)-methyl-L-lysyl-[protein] + S-adenosyl-L-methionine = N(6),N(6)-dimethyl-L-lysyl-[protein] + S-adenosyl-L-homocysteine + H(+). It carries out the reaction L-lysyl(4)-[histone H3] + 3 S-adenosyl-L-methionine = N(6),N(6),N(6)-trimethyl-L-lysyl(4)-[histone H3] + 3 S-adenosyl-L-homocysteine + 3 H(+). The enzyme catalyses L-lysyl(36)-[histone H3] + 3 S-adenosyl-L-methionine = N(6),N(6),N(6)-trimethyl-L-lysyl(36)-[histone H3] + 3 S-adenosyl-L-homocysteine + 3 H(+). The catalysed reaction is L-lysyl(9)-[histone H3] + 3 S-adenosyl-L-methionine = N(6),N(6),N(6)-trimethyl-L-lysyl(9)-[histone H3] + 3 S-adenosyl-L-homocysteine + 3 H(+). It catalyses the reaction L-lysyl(20)-[histone H4] + S-adenosyl-L-methionine = N(6)-methyl-L-lysyl(20)-[histone H4] + S-adenosyl-L-homocysteine + H(+). It carries out the reaction N(6)-methyl-L-lysyl(20)-[histone H4] + S-adenosyl-L-methionine = N(6),N(6)-dimethyl-L-lysyl(20)-[histone H4] + S-adenosyl-L-homocysteine + H(+). With respect to regulation, inhibited by suramin with an IC(50) of 4.1 uM. In terms of biological role, histone methyltransferase that sequentially mono-, di-, and tri-methylates both 'Lys-4' (H3K4) and 'Lys-36' (H3K36) of histone H3 to produce respectively trimethylated 'Lys-4' (H3K4me3) and trimethylated 'Lys-36' (H3K36me3) histone H3 and plays a key role in meiotic prophase by determining hotspot localization thereby promoting meiotic recombination. Can also methylate all four core histones with H3 being the best substrate and the most highly modified. Is also able, on one hand, to mono and di-methylate H4K20 and on other hand to trimethylate H3K9 with the di-methylated H3K9 as the best substrate. During meiotic prophase, binds specific DNA sequences through its zinc finger domains thereby determining hotspot localization where it promotes local H3K4me3 and H3K36me3 enrichment on the same nucleosomes through its histone methyltransferase activity. Thereby promotes double-stranded breaks (DSB) formation, at this subset of PRDM9-binding sites, that initiates meiotic recombination for the proper meiotic progression. During meiotic progression hotspot-bound PRDM9 interacts with several complexes; in early leptonema binds CDYL and EHMT2 followed by EWSR1 and CXXC1 by the end of leptonema. EWSR1 joins PRDM9 with the chromosomal axis through REC8. In this way, controls the DSB repair pathway, pairing of homologous chromosomes and sex body formation. Moreover plays a central role in the transcriptional activation of genes during early meiotic prophase thanks to H3K4me3 and H3K36me3 enrichment that represents a specific tag for epigenetic transcriptional activation. In addition performs automethylation. Acetylation and phosphorylation of histone H3 attenuate or prevent histone H3 methylation. This Homo sapiens (Human) protein is Histone-lysine N-methyltransferase PRDM9.